Reading from the N-terminus, the 435-residue chain is Serine--tRNA ligase (435 aa).

237–239 is an L-serine binding site; the sequence is TAE. 268-270 is a binding site for ATP; that stretch reads RSE. Glutamate 291 provides a ligand contact to L-serine. Position 355–358 (355–358) interacts with ATP; it reads EISS. Serine 390 is an L-serine binding site.

The protein belongs to the class-II aminoacyl-tRNA synthetase family. Type-1 seryl-tRNA synthetase subfamily. Homodimer. The tRNA molecule binds across the dimer.

The protein resides in the cytoplasm. The catalysed reaction is tRNA(Ser) + L-serine + ATP = L-seryl-tRNA(Ser) + AMP + diphosphate + H(+). The enzyme catalyses tRNA(Sec) + L-serine + ATP = L-seryl-tRNA(Sec) + AMP + diphosphate + H(+). Its pathway is aminoacyl-tRNA biosynthesis; selenocysteinyl-tRNA(Sec) biosynthesis; L-seryl-tRNA(Sec) from L-serine and tRNA(Sec): step 1/1. Its function is as follows. Catalyzes the attachment of serine to tRNA(Ser). Is also able to aminoacylate tRNA(Sec) with serine, to form the misacylated tRNA L-seryl-tRNA(Sec), which will be further converted into selenocysteinyl-tRNA(Sec). This chain is Serine--tRNA ligase, found in Lactobacillus acidophilus (strain ATCC 700396 / NCK56 / N2 / NCFM).